Here is a 135-residue protein sequence, read N- to C-terminus: Probable 5-hydroxyisourate hydrolase R09H10.3 (135 aa).

The first 20 residues, 1–20, serve as a signal peptide directing secretion; sequence MNKFSLFFALTATLMTITES. His-30, Arg-68, and Tyr-132 together coordinate substrate.

This sequence belongs to the transthyretin family. 5-hydroxyisourate hydrolase subfamily. Homotetramer.

The enzyme catalyses 5-hydroxyisourate + H2O = 5-hydroxy-2-oxo-4-ureido-2,5-dihydro-1H-imidazole-5-carboxylate + H(+). In terms of biological role, catalyzes the hydrolysis of 5-hydroxyisourate (HIU) to 2-oxo-4-hydroxy-4-carboxy-5-ureidoimidazoline (OHCU). This Caenorhabditis elegans protein is Probable 5-hydroxyisourate hydrolase R09H10.3.